The primary structure comprises 347 residues: Dihydroorotase (347 aa).

The Zn(2+) site is built by histidine 14 and histidine 16. Substrate is bound by residues 16–18 (HLR) and asparagine 42. Zn(2+) contacts are provided by lysine 100, histidine 137, and histidine 175. Lysine 100 carries the post-translational modification N6-carboxylysine. Position 137 (histidine 137) interacts with substrate. Leucine 220 provides a ligand contact to substrate. Residue aspartate 248 coordinates Zn(2+). Residue aspartate 248 is part of the active site. Positions 252 and 264 each coordinate substrate.

This sequence belongs to the metallo-dependent hydrolases superfamily. DHOase family. Class II DHOase subfamily. In terms of assembly, homodimer. The cofactor is Zn(2+).

The enzyme catalyses (S)-dihydroorotate + H2O = N-carbamoyl-L-aspartate + H(+). It participates in pyrimidine metabolism; UMP biosynthesis via de novo pathway; (S)-dihydroorotate from bicarbonate: step 3/3. Catalyzes the reversible cyclization of carbamoyl aspartate to dihydroorotate. The sequence is that of Dihydroorotase from Stutzerimonas stutzeri (strain A1501) (Pseudomonas stutzeri).